A 338-amino-acid polypeptide reads, in one-letter code: MO25-like protein 2 (338 aa).

The protein belongs to the Mo25 family.

It localises to the cytoplasm. The protein localises to the cytoskeleton. The protein resides in the spindle pole. Its function is as follows. Regulates asymmetric cell division in Q.p neuroblast lineage. Plays a role in cell shedding during embryogenesis. The protein is MO25-like protein 2 (mop-25.2) of Caenorhabditis elegans.